The sequence spans 430 residues: MAAIESVYARQILDSRGNPTVEVVLDTDDGARGLGLVPSGASTGEAEAWERRDGDKSVYQGKGVLGAVKAVNEEIAPKVIGMDATDQRALDDLMIELDGTPNKGRLGANAILGVSLAALYAAAESAELPLYRYIGGTNGHVLPVPNMNIMNGGAHADFATDIQEYMISPYGFQTYSEALQAGVEVYHTLKNVLKKQGLATGLGDEGGFAPKMKTNEDSLKYIMDAISAAGYEPGKQIGIALDVASSEFYNKETGKYHFDGEDRDSEYMLDFYEKLVDQFPIVSIEDPFQEEGWEDWAKITKALGDRLQFVGDDLFVTNPVRLKKGIDMGAGNSLLVKLNQIGTVSETLDAIELATKNGFTSMVSHRSGETPDTTISDLAVAKNTGQIKTGAPARGERIAKYNRLLEIEEELGSTAEYAGYSAFKACRKYM.

Glutamine 163 is a (2R)-2-phosphoglycerate binding site. Glutamate 205 acts as the Proton donor in catalysis. 3 residues coordinate Mg(2+): aspartate 242, glutamate 285, and aspartate 312. Positions 337, 366, 367, and 388 each coordinate (2R)-2-phosphoglycerate. Lysine 337 functions as the Proton acceptor in the catalytic mechanism.

Belongs to the enolase family. It depends on Mg(2+) as a cofactor.

It localises to the cytoplasm. The protein resides in the secreted. Its subcellular location is the cell surface. The catalysed reaction is (2R)-2-phosphoglycerate = phosphoenolpyruvate + H2O. Its pathway is carbohydrate degradation; glycolysis; pyruvate from D-glyceraldehyde 3-phosphate: step 4/5. In terms of biological role, catalyzes the reversible conversion of 2-phosphoglycerate (2-PG) into phosphoenolpyruvate (PEP). It is essential for the degradation of carbohydrates via glycolysis. This is Enolase from Bifidobacterium animalis subsp. lactis (strain AD011).